The chain runs to 288 residues: Probable chromosome 1-partitioning protein ParB (288 aa).

It belongs to the ParB family.

Functionally, involved in chromosome partition. Localize to both poles of the predivisional cell following completion of DNA replication. Binds to the DNA origin of replication. This chain is Probable chromosome 1-partitioning protein ParB (parB1), found in Deinococcus radiodurans (strain ATCC 13939 / DSM 20539 / JCM 16871 / CCUG 27074 / LMG 4051 / NBRC 15346 / NCIMB 9279 / VKM B-1422 / R1).